A 740-amino-acid polypeptide reads, in one-letter code: Autotransporter adhesin BtaE (740 aa).

The first 11 residues, 1 to 11 (MFGLSVNHAYA), serve as a signal peptide directing secretion. Residues 12–647 (GPGIFINDGT…LQTLDQANAY (636 aa)) form a surface exposed passenger domain region. Positions 648–686 (TDKKFGKLNEDIVATRIEARQAAAIGLAAASLRYDDRPG) are outer membrane translocation of the passenger domain. 4 beta stranded membrane passes run 686–696 (GKISAAIGGGF), 700–710 (EGAVALGLGHT), 719–725 (NLSAATS), and 728–739 (NWGMGAGFSYTF). Residues 687 to 740 (KISAAIGGGFWRGEGAVALGLGHTSEDQRMRSNLSAATSGGNWGMGAGFSYTFN) form a translocator domain region.

Belongs to the autotransporter-2 (AT-2) (TC 1.B.40) family. In terms of assembly, homotrimer.

It localises to the cell surface. Its subcellular location is the cell outer membrane. In terms of biological role, binds to hyaluronic acid and epithelial cells, and is required for full virulence in the mouse model. The chain is Autotransporter adhesin BtaE from Brucella suis biovar 1 (strain 1330).